We begin with the raw amino-acid sequence, 98 residues long: Integration host factor subunit alpha (98 aa).

A disordered region spans residues 49–71; it reads FGNFDLRDKNQRPGRNPKTGEDI.

It belongs to the bacterial histone-like protein family. As to quaternary structure, heterodimer of an alpha and a beta chain.

Functionally, this protein is one of the two subunits of integration host factor, a specific DNA-binding protein that functions in genetic recombination as well as in transcriptional and translational control. This chain is Integration host factor subunit alpha, found in Edwardsiella ictaluri (strain 93-146).